Reading from the N-terminus, the 172-residue chain is uncharacterized protein (172 aa).

A HotDog ACOT-type domain is found at 10-122; that stretch reads KESKVVKTSR…FLTFVALDSN (113 aa). A disordered region spans residues 148–172; it reads RANERKNRKRHSQALANALGTDKPW.

The protein belongs to the acyl coenzyme A hydrolase family.

This is an uncharacterized protein from Bacillus subtilis (strain 168).